We begin with the raw amino-acid sequence, 123 residues long: Small ribosomal subunit protein uS12 (123 aa).

A disordered region spans residues 1 to 28 (MPTIQQLIRNPREPKRTRTKTPALKACP). A 3-methylthioaspartic acid modification is found at D89. The interval 104-123 (TQPVKNRKQRRSHYGAKKPK) is disordered. Over residues 108–123 (KNRKQRRSHYGAKKPK) the composition is skewed to basic residues.

This sequence belongs to the universal ribosomal protein uS12 family. As to quaternary structure, part of the 30S ribosomal subunit. Contacts proteins S8 and S17. May interact with IF1 in the 30S initiation complex.

In terms of biological role, with S4 and S5 plays an important role in translational accuracy. Its function is as follows. Interacts with and stabilizes bases of the 16S rRNA that are involved in tRNA selection in the A site and with the mRNA backbone. Located at the interface of the 30S and 50S subunits, it traverses the body of the 30S subunit contacting proteins on the other side and probably holding the rRNA structure together. The combined cluster of proteins S8, S12 and S17 appears to hold together the shoulder and platform of the 30S subunit. The chain is Small ribosomal subunit protein uS12 from Hyphomonas neptunium (strain ATCC 15444).